Reading from the N-terminus, the 569-residue chain is Proton-coupled zinc antiporter SLC30A9, mitochondrial (569 aa).

The N-terminal 68 residues, 1 to 68 (MLPGLAAAAA…IGTLSQVKLY (68 aa)), are a transit peptide targeting the mitochondrion. A run of 5 helical transmembrane segments spans residues 240-260 (VVMVAICINGLNCFFKFLAWI), 315-335 (GVGIFMMGAGLSWYHGVMGLL), 343-363 (LLWAYCILAGSLVSEGATLLV), 393-413 (VILLEDTAAVLGVIIAATCMG), and 425-445 (SLGSLGVGTLLGMVSAFLIYT). Residues 463-467 (LTELL) carry the LXXLL motif motif.

It belongs to the cation diffusion facilitator (CDF) transporter (TC 2.A.4) family. SLC30A subfamily. As to quaternary structure, interacts with GRIP1, ESR1, AR and CTNNB1.

It is found in the mitochondrion membrane. The protein localises to the nucleus. It localises to the endoplasmic reticulum. It catalyses the reaction Zn(2+)(in) + 2 H(+)(out) = Zn(2+)(out) + 2 H(+)(in). In terms of biological role, mitochondrial proton-coupled zinc ion antiporter mediating the export of zinc from the mitochondria and involved in zinc homeostasis, zinc mobilization as well as mitochondrial morphology and health. In nucleus, functions as a secondary coactivator for nuclear receptors by cooperating with p160 coactivators subtypes. Plays a role in transcriptional activation of Wnt-responsive genes. The chain is Proton-coupled zinc antiporter SLC30A9, mitochondrial (SLC30A9) from Pongo abelii (Sumatran orangutan).